Reading from the N-terminus, the 243-residue chain is NEDD4-binding protein 2-like 1 (243 aa).

A disordered region spans residues methionine 1–histidine 38.

In terms of assembly, interacts with dynactin subunit proteins, including DCTN4, DCTN5 and DCTN5.

Functionally, might play a role in adipocyte differentiation and triglyceride accumulation. The sequence is that of NEDD4-binding protein 2-like 1 (N4BP2L1) from Homo sapiens (Human).